Consider the following 436-residue polypeptide: Citrate synthase (436 aa).

Residues His-311 and Asp-370 contribute to the active site.

It belongs to the citrate synthase family.

It carries out the reaction oxaloacetate + acetyl-CoA + H2O = citrate + CoA + H(+). Its pathway is carbohydrate metabolism; tricarboxylic acid cycle; isocitrate from oxaloacetate: step 1/2. The chain is Citrate synthase (gltA) from Rickettsia typhi (strain ATCC VR-144 / Wilmington).